The following is a 202-amino-acid chain: Recombination protein RecR (202 aa).

The segment at 59 to 74 (CSVCFHLSAEPVCEIC) adopts a C4-type zinc-finger fold. Positions 82-176 (HTICVVADSR…KVTRIAFGLP (95 aa)) constitute a Toprim domain.

The protein belongs to the RecR family.

Its function is as follows. May play a role in DNA repair. It seems to be involved in an RecBC-independent recombinational process of DNA repair. It may act with RecF and RecO. This Thermosynechococcus vestitus (strain NIES-2133 / IAM M-273 / BP-1) protein is Recombination protein RecR.